The following is a 586-amino-acid chain: Eukaryotic translation initiation factor 3 subunit D (586 aa).

Positions 107–154 (FGRGGGTVFRGRAQRGGAGQRGGRAGFQRVGAGRGQGGDRYYDNRGAR) are disordered. A compositionally biased stretch (gly residues) spans 108–131 (GRGGGTVFRGRAQRGGAGQRGGRA). The interval 301-315 (SLDLVTVNENAADAP) is RNA gate. The segment covering 566-577 (FEEDDEAAEEEQ) has biased composition (acidic residues). The tract at residues 566–586 (FEEDDEAAEEEQEAKGEVEEA) is disordered.

It belongs to the eIF-3 subunit D family. As to quaternary structure, component of the eukaryotic translation initiation factor 3 (eIF-3) complex.

The protein resides in the cytoplasm. Functionally, mRNA cap-binding component of the eukaryotic translation initiation factor 3 (eIF-3) complex, which is involved in protein synthesis of a specialized repertoire of mRNAs and, together with other initiation factors, stimulates binding of mRNA and methionyl-tRNAi to the 40S ribosome. The eIF-3 complex specifically targets and initiates translation of a subset of mRNAs involved in cell proliferation. In the eIF-3 complex, eif3d specifically recognizes and binds the 7-methylguanosine cap of a subset of mRNAs. In Emericella nidulans (strain FGSC A4 / ATCC 38163 / CBS 112.46 / NRRL 194 / M139) (Aspergillus nidulans), this protein is Eukaryotic translation initiation factor 3 subunit D.